The primary structure comprises 104 residues: Large ribosomal subunit protein uL24 (104 aa).

Belongs to the universal ribosomal protein uL24 family. In terms of assembly, part of the 50S ribosomal subunit.

Its function is as follows. One of two assembly initiator proteins, it binds directly to the 5'-end of the 23S rRNA, where it nucleates assembly of the 50S subunit. One of the proteins that surrounds the polypeptide exit tunnel on the outside of the subunit. The chain is Large ribosomal subunit protein uL24 from Buchnera aphidicola subsp. Acyrthosiphon pisum (strain 5A).